Reading from the N-terminus, the 196-residue chain is Ribonuclease H (196 aa).

One can recognise an RNase H type-1 domain in the interval 58-196 (LAKEEIIWES…GEIKADYGRK (139 aa)). Positions 71, 109, 132, and 192 each coordinate Mg(2+).

This sequence belongs to the RNase H family. Mn(2+) serves as cofactor. It depends on Mg(2+) as a cofactor.

It is found in the cytoplasm. The catalysed reaction is Endonucleolytic cleavage to 5'-phosphomonoester.. Endonuclease that specifically degrades the RNA of RNA-DNA hybrids. This is Ribonuclease H (rnhA) from Halalkalibacterium halodurans (strain ATCC BAA-125 / DSM 18197 / FERM 7344 / JCM 9153 / C-125) (Bacillus halodurans).